The chain runs to 118 residues: MAGVMKLACLVLACMIVAGPITANRALTCGTVNSNVAPCIGYITQGGTLPGACCTGVSKLNSMARTTPDRQQACRCLETAARALGPNLNAGRAAGIPKACGVSVPFPISTNTNCNNVK.

The first 25 residues, 1 to 25 (MAGVMKLACLVLACMIVAGPITANR), serve as a signal peptide directing secretion. 4 disulfides stabilise this stretch: Cys29-Cys76, Cys39-Cys53, Cys54-Cys100, and Cys74-Cys114.

It belongs to the plant LTP family.

Plant non-specific lipid-transfer proteins transfer phospholipids as well as galactolipids across membranes. May play a role in wax or cutin deposition in the cell walls of expanding epidermal cells and certain secretory tissues. The polypeptide is Non-specific lipid-transfer protein A (WAX9A) (Brassica oleracea var. italica (Broccoli)).